Reading from the N-terminus, the 152-residue chain is Endoribonuclease YbeY (152 aa).

Zn(2+) contacts are provided by H113, H117, and H123.

This sequence belongs to the endoribonuclease YbeY family. Requires Zn(2+) as cofactor.

Its subcellular location is the cytoplasm. Functionally, single strand-specific metallo-endoribonuclease involved in late-stage 70S ribosome quality control and in maturation of the 3' terminus of the 16S rRNA. This Janthinobacterium sp. (strain Marseille) (Minibacterium massiliensis) protein is Endoribonuclease YbeY.